The following is a 69-amino-acid chain: Large ribosomal subunit protein uL29 (69 aa).

This sequence belongs to the universal ribosomal protein uL29 family.

In Natronomonas pharaonis (strain ATCC 35678 / DSM 2160 / CIP 103997 / JCM 8858 / NBRC 14720 / NCIMB 2260 / Gabara) (Halobacterium pharaonis), this protein is Large ribosomal subunit protein uL29.